The chain runs to 593 residues: Proline--tRNA ligase (593 aa).

It belongs to the class-II aminoacyl-tRNA synthetase family. ProS type 1 subfamily. Homodimer.

Its subcellular location is the cytoplasm. The catalysed reaction is tRNA(Pro) + L-proline + ATP = L-prolyl-tRNA(Pro) + AMP + diphosphate. Its function is as follows. Catalyzes the attachment of proline to tRNA(Pro) in a two-step reaction: proline is first activated by ATP to form Pro-AMP and then transferred to the acceptor end of tRNA(Pro). As ProRS can inadvertently accommodate and process non-cognate amino acids such as alanine and cysteine, to avoid such errors it has two additional distinct editing activities against alanine. One activity is designated as 'pretransfer' editing and involves the tRNA(Pro)-independent hydrolysis of activated Ala-AMP. The other activity is designated 'posttransfer' editing and involves deacylation of mischarged Ala-tRNA(Pro). The misacylated Cys-tRNA(Pro) is not edited by ProRS. The sequence is that of Proline--tRNA ligase from Synechococcus sp. (strain CC9605).